The following is a 607-amino-acid chain: V-type proton ATPase catalytic subunit A (607 aa).

An ATP-binding site is contributed by 251–258; it reads GAFGCGKT.

The protein belongs to the ATPase alpha/beta chains family. As to quaternary structure, V-ATPase is a heteromultimeric enzyme composed of a peripheral catalytic V1 complex (components A to H) attached to an integral membrane V0 proton pore complex (components: a, c, c', c'', d, e, f and VOA1).

It is found in the vacuole membrane. It carries out the reaction ATP + H2O + 4 H(+)(in) = ADP + phosphate + 5 H(+)(out). Catalytic subunit of the V1 complex of vacuolar(H+)-ATPase (V-ATPase), a multisubunit enzyme composed of a peripheral complex (V1) that hydrolyzes ATP and a membrane integral complex (V0) that translocates protons. V-ATPase is responsible for acidifying and maintaining the pH of intracellular compartments. This is V-type proton ATPase catalytic subunit A (VMA1) from Encephalitozoon cuniculi (strain GB-M1) (Microsporidian parasite).